The primary structure comprises 100 residues: Cytochrome c2 iso-1 (100 aa).

The heme c site is built by cysteine 11, cysteine 14, histidine 15, and methionine 76.

The protein belongs to the cytochrome c family. In terms of processing, binds 1 heme c group covalently per subunit.

In terms of biological role, cytochrome c2 is found mainly in purple, non-sulfur, photosynthetic bacteria where it functions as the electron donor to the oxidized bacteriochlorophyll in the photophosphorylation pathway. However, it may also have a role in the respiratory chain and is found in some non-photosynthetic bacteria. In Magnetospirillum molischianum (Rhodospirillum molischianum), this protein is Cytochrome c2 iso-1.